The sequence spans 137 residues: Putative pre-16S rRNA nuclease (137 aa).

This sequence belongs to the YqgF nuclease family.

Its subcellular location is the cytoplasm. In terms of biological role, could be a nuclease involved in processing of the 5'-end of pre-16S rRNA. The sequence is that of Putative pre-16S rRNA nuclease from Bacillus mycoides (strain KBAB4) (Bacillus weihenstephanensis).